The chain runs to 163 residues: Small ribosomal subunit protein uS9 (163 aa).

Residues 1 to 11 (MAENTNDSQVV) show a composition bias toward polar residues. Residues 1–40 (MAENTNDSQVVETEEELTNYTTETNAGAGTGTSAIEPGYG) form a disordered region. Over residues 18–27 (TNYTTETNAG) the composition is skewed to low complexity.

Belongs to the universal ribosomal protein uS9 family.

This chain is Small ribosomal subunit protein uS9, found in Bifidobacterium longum (strain DJO10A).